The following is a 358-amino-acid chain: C-C chemokine receptor type 3 (358 aa).

The Extracellular segment spans residues 1–43; it reads MATYPEEAELETEFPGTTFYDYEFAQPCFKVSITDLGAQFLPS. Residues 44-64 traverse the membrane as a helical segment; sequence LFSLVFIVGLLGNITVIVVLT. Topologically, residues 65–74 are cytoplasmic; the sequence is KYQKLKIMTN. Residues 75–95 form a helical membrane-spanning segment; that stretch reads IYLLNLAISDLLFLFTLPFWT. The Extracellular portion of the chain corresponds to 96-112; that stretch reads YYVHWNKWVFGHFMCKI. Residues 113–133 traverse the membrane as a helical segment; sequence ISGLYYVGLFSEIFFIILLTI. The Cytoplasmic segment spans residues 134-154; that stretch reads DRYLAIVHAVFALRTRTVTFG. The helical transmembrane segment at 155–175 threads the bilayer; the sequence is IITSVITWVLAVLAALPEFMF. The Extracellular segment spans residues 176-206; that stretch reads YGTQGHFEVLFCGPSYPEKKEHHWKRFQALR. A helical transmembrane segment spans residues 207 to 227; the sequence is MNIFGLALPLLIMIICYTGII. The Cytoplasmic portion of the chain corresponds to 228–243; that stretch reads KTLLRCPSKKKYKAIR. A helical transmembrane segment spans residues 244 to 264; it reads LIFVIMVVFFVFWTPYNLLLL. Residues 265-287 lie on the Extracellular side of the membrane; it reads FSAFDLSFLDDCERSKQLDMAKH. Residues 288 to 308 traverse the membrane as a helical segment; sequence VTEVIAHTHCCINPIIYAFVG. The Cytoplasmic portion of the chain corresponds to 309–358; that stretch reads ERFQKYLRHFLHRNVTMHLSKYIPFFTSEKLERSSSISPSSGDPELSVVF.

Belongs to the G-protein coupled receptor 1 family.

Its subcellular location is the cell membrane. Functionally, receptor for C-C type chemokine. Binds and responds to a variety of chemokines, including CCL11, CCL26, CCL7, CCL13, RANTES(CCL5) and CCL15. Subsequently transduces a signal by increasing the intracellular calcium ions level. In addition acts as a possible functional receptor for NARS1. The sequence is that of C-C chemokine receptor type 3 (CCR3) from Cavia porcellus (Guinea pig).